We begin with the raw amino-acid sequence, 937 residues long: Translation initiation factor IF-2 (937 aa).

Disordered regions lie at residues 61–156 (IQAN…KAKQ) and 171–274 (LTQS…SHKI). A compositionally biased stretch (basic and acidic residues) spans 179 to 196 (AKKEISEVKKQEQEIKRH). Residues 197 to 208 (ENIKRRTGFRVI) are compositionally biased toward basic residues. Residues 237 to 252 (EDIKKEWQEKDKQEAK) are compositionally biased toward basic and acidic residues. The 170-residue stretch at 436–605 (ERPPVVTIMG…LIQADIMELK (170 aa)) folds into the tr-type G domain. Residues 445 to 452 (GHVDHGKT) are G1. A GTP-binding site is contributed by 445 to 452 (GHVDHGKT). Residues 470–474 (GITQH) form a G2 region. The segment at 491 to 494 (DTPG) is G3. Residues 491–495 (DTPGH) and 545–548 (NKMD) each bind GTP. The G4 stretch occupies residues 545-548 (NKMD). The G5 stretch occupies residues 581-583 (SAK).

This sequence belongs to the TRAFAC class translation factor GTPase superfamily. Classic translation factor GTPase family. IF-2 subfamily.

It is found in the cytoplasm. In terms of biological role, one of the essential components for the initiation of protein synthesis. Protects formylmethionyl-tRNA from spontaneous hydrolysis and promotes its binding to the 30S ribosomal subunits. Also involved in the hydrolysis of GTP during the formation of the 70S ribosomal complex. This is Translation initiation factor IF-2 from Helicobacter pylori (strain G27).